The sequence spans 196 residues: Autophagy-related protein 31 (196 aa).

Residues 20-45 (IKNNKGPSNDDQPAYNNESKSTDGSD) form a disordered region. A compositionally biased stretch (polar residues) spans 22–43 (NNKGPSNDDQPAYNNESKSTDG). A phosphoserine mark is found at serine 38 and serine 40. Phosphothreonine is present on threonine 41. Residues serine 44 and serine 116 each carry the phosphoserine modification. Positions 120–129 (EENQMRTLSS) are enriched in polar residues. Positions 120–145 (EENQMRTLSSHGDDKSNDEEEELSVD) are disordered. Residues serine 135, serine 143, serine 146, serine 153, serine 174, and serine 195 each carry the phosphoserine modification. Positions 135–144 (SNDEEEELSV) are enriched in acidic residues.

As to quaternary structure, forms a stable complex with ATG17 and ATG29. Interacts directly with ATG29. The ATG17-ATG29-ATG31 complex interacts with the ATG1-ATG13 complex. Note=The interaction with the ATG1-ATG13 complex is induced by starvation. Highly phosphorylated. Ser-174 is phosphorylated constitutively. Phosphorylation at Ser-174 is required for autophagy induced by various autophagy stimuli such as nitrogen starvation and rapamycin treatment.

The protein localises to the cytoplasm. The protein resides in the cytoskeleton. It localises to the preautophagosomal structure. Its function is as follows. Plays a role in starvation-induced autophagy. Involved in mitophagy. Functions with ATG17 and ATG29 at the preautophagosomal structure (PAS) in order to form normal autophagosomes under starvation conditions. May be involved in microtubule function, such as chromosome segregation and karyogamy. The chain is Autophagy-related protein 31 (ATG31) from Saccharomyces cerevisiae (strain ATCC 204508 / S288c) (Baker's yeast).